The following is a 316-amino-acid chain: 4-hydroxy-3-methylbut-2-enyl diphosphate reductase (316 aa).

Cys-12 contributes to the [4Fe-4S] cluster binding site. Residues His-41 and His-74 each coordinate (2E)-4-hydroxy-3-methylbut-2-enyl diphosphate. 2 residues coordinate dimethylallyl diphosphate: His-41 and His-74. The isopentenyl diphosphate site is built by His-41 and His-74. Cys-96 contacts [4Fe-4S] cluster. His-124 contributes to the (2E)-4-hydroxy-3-methylbut-2-enyl diphosphate binding site. Residue His-124 participates in dimethylallyl diphosphate binding. His-124 serves as a coordination point for isopentenyl diphosphate. Glu-126 serves as the catalytic Proton donor. (2E)-4-hydroxy-3-methylbut-2-enyl diphosphate is bound at residue Thr-168. Position 198 (Cys-198) interacts with [4Fe-4S] cluster. (2E)-4-hydroxy-3-methylbut-2-enyl diphosphate contacts are provided by Ser-226, Ser-227, Asn-228, and Ser-270. Ser-226, Ser-227, Asn-228, and Ser-270 together coordinate dimethylallyl diphosphate. Positions 226, 227, 228, and 270 each coordinate isopentenyl diphosphate.

The protein belongs to the IspH family. The cofactor is [4Fe-4S] cluster.

It carries out the reaction isopentenyl diphosphate + 2 oxidized [2Fe-2S]-[ferredoxin] + H2O = (2E)-4-hydroxy-3-methylbut-2-enyl diphosphate + 2 reduced [2Fe-2S]-[ferredoxin] + 2 H(+). It catalyses the reaction dimethylallyl diphosphate + 2 oxidized [2Fe-2S]-[ferredoxin] + H2O = (2E)-4-hydroxy-3-methylbut-2-enyl diphosphate + 2 reduced [2Fe-2S]-[ferredoxin] + 2 H(+). The protein operates within isoprenoid biosynthesis; dimethylallyl diphosphate biosynthesis; dimethylallyl diphosphate from (2E)-4-hydroxy-3-methylbutenyl diphosphate: step 1/1. Its pathway is isoprenoid biosynthesis; isopentenyl diphosphate biosynthesis via DXP pathway; isopentenyl diphosphate from 1-deoxy-D-xylulose 5-phosphate: step 6/6. Its function is as follows. Catalyzes the conversion of 1-hydroxy-2-methyl-2-(E)-butenyl 4-diphosphate (HMBPP) into a mixture of isopentenyl diphosphate (IPP) and dimethylallyl diphosphate (DMAPP). Acts in the terminal step of the DOXP/MEP pathway for isoprenoid precursor biosynthesis. The protein is 4-hydroxy-3-methylbut-2-enyl diphosphate reductase of Acinetobacter baylyi (strain ATCC 33305 / BD413 / ADP1).